We begin with the raw amino-acid sequence, 249 residues long: ATP synthase subunit a (249 aa).

6 helical membrane passes run 30-50 (QSPVMMIVASVLVLAFLYVGM), 86-106 (FFPFIFTLFFFILAGNYLGLL), 115-135 (HIAVTLALALLVFVLAVIVSL), 142-162 (FFAHFMPAGAPVALAPLLVPI), 191-211 (MFAAFTIMLAGLGLFGDVLAV), and 218-238 (VALMALELLVGALQAYVFAIL).

This sequence belongs to the ATPase A chain family. In terms of assembly, F-type ATPases have 2 components, CF(1) - the catalytic core - and CF(0) - the membrane proton channel. CF(1) has five subunits: alpha(3), beta(3), gamma(1), delta(1), epsilon(1). CF(0) has three main subunits: a(1), b(2) and c(9-12). The alpha and beta chains form an alternating ring which encloses part of the gamma chain. CF(1) is attached to CF(0) by a central stalk formed by the gamma and epsilon chains, while a peripheral stalk is formed by the delta and b chains.

The protein localises to the cell inner membrane. Its function is as follows. Key component of the proton channel; it plays a direct role in the translocation of protons across the membrane. The protein is ATP synthase subunit a of Gluconacetobacter diazotrophicus (strain ATCC 49037 / DSM 5601 / CCUG 37298 / CIP 103539 / LMG 7603 / PAl5).